The sequence spans 311 residues: ATP synthase gamma chain (311 aa).

C67 and C138 are disulfide-bonded.

Belongs to the ATPase gamma chain family. In terms of assembly, F-type ATPases have 2 components, CF(1) - the catalytic core - and CF(0) - the membrane proton channel. CF(1) has five subunits: alpha(3), beta(3), gamma(1), delta(1), epsilon(1). CF(0) has three main subunits: a, b and c.

It is found in the cellular thylakoid membrane. Its activity is regulated as follows. Thiol-modulation by raising the activation threshold of the enzyme upon oxidation of the cysteines, thereby preventing wasteful ATP-hydrolysis. Produces ATP from ADP in the presence of a proton gradient across the membrane. The gamma chain is believed to be important in regulating ATPase activity and the flow of protons through the CF(0) complex. The sequence is that of ATP synthase gamma chain (atpG) from Arthrospira platensis (Spirulina platensis).